The primary structure comprises 347 residues: HTH-type transcriptional regulator PhcA (347 aa).

The HTH lysR-type domain occupies 1-61 (MVNVDTKLLV…IRVPHGLTPT (61 aa)). Positions 21–40 (ATYVAEKMHMTAPAVSHSLG) form a DNA-binding region, H-T-H motif. The segment at 316–347 (PMHPPMLTDDSGKSGKTGKGDAEKEDESRLSV) is disordered. Basic and acidic residues predominate over residues 325–347 (DSGKSGKTGKGDAEKEDESRLSV).

It belongs to the LysR transcriptional regulatory family.

Regulates the transcription of one or more of the genes involved in virulence. This chain is HTH-type transcriptional regulator PhcA (phcA), found in Ralstonia nicotianae (strain ATCC BAA-1114 / GMI1000) (Ralstonia solanacearum).